The following is a 238-amino-acid chain: Alpha-tubulin N-acetyltransferase (238 aa).

Residues 1–196 form the N-acetyltransferase domain; the sequence is MEFDFDISQS…NNFVVFEDLF (196 aa). Residues 129–142 and 165–174 contribute to the acetyl-CoA site; these read FYVH…GNGK and SFKFLSFLQK.

The protein belongs to the acetyltransferase ATAT1 family.

It carries out the reaction L-lysyl-[alpha-tubulin] + acetyl-CoA = N(6)-acetyl-L-lysyl-[alpha-tubulin] + CoA + H(+). Its function is as follows. Specifically acetylates 'Lys-40' in alpha-tubulin on the lumenal side of microtubules. Promotes microtubule destabilization and accelerates microtubule dynamics; this activity may be independent of acetylation activity. Acetylates alpha-tubulin with a slow enzymatic rate, due to a catalytic site that is not optimized for acetyl transfer. Enters the microtubule through each end and diffuses quickly throughout the lumen of microtubules. Acetylates only long/old microtubules because of its slow acetylation rate since it does not have time to act on dynamically unstable microtubules before the enzyme is released. The chain is Alpha-tubulin N-acetyltransferase from Trichoplax adhaerens (Trichoplax reptans).